The following is a 266-amino-acid chain: uncharacterized protein (266 aa).

The first 22 residues, 1–22, serve as a signal peptide directing secretion; it reads MGYFKRVVLYIIVMVVSVFIIG. Cysteine 23 carries N-palmitoyl cysteine lipidation. The S-diacylglycerol cysteine moiety is linked to residue cysteine 23.

Belongs to the staphylococcal tandem lipoprotein family.

Its subcellular location is the cell membrane. This is an uncharacterized protein from Staphylococcus aureus (strain N315).